Here is a 252-residue protein sequence, read N- to C-terminus: Phosphate import ATP-binding protein PstB (252 aa).

The ABC transporter domain occupies 5–247 (MRGQDVKVFY…PKEQRTQDYI (243 aa)). Residue 37–44 (GPSGCGKS) coordinates ATP.

This sequence belongs to the ABC transporter superfamily. Phosphate importer (TC 3.A.1.7) family. The complex is composed of two ATP-binding proteins (PstB), two transmembrane proteins (PstC and PstA) and a solute-binding protein (PstS).

It localises to the cell inner membrane. The enzyme catalyses phosphate(out) + ATP + H2O = ADP + 2 phosphate(in) + H(+). Its function is as follows. Part of the ABC transporter complex PstSACB involved in phosphate import. Responsible for energy coupling to the transport system. The polypeptide is Phosphate import ATP-binding protein PstB (Bartonella henselae (strain ATCC 49882 / DSM 28221 / CCUG 30454 / Houston 1) (Rochalimaea henselae)).